Consider the following 292-residue polypeptide: Elongation factor Ts (292 aa).

An involved in Mg(2+) ion dislocation from EF-Tu region spans residues 79–82 (TDFV).

The protein belongs to the EF-Ts family.

Its subcellular location is the cytoplasm. In terms of biological role, associates with the EF-Tu.GDP complex and induces the exchange of GDP to GTP. It remains bound to the aminoacyl-tRNA.EF-Tu.GTP complex up to the GTP hydrolysis stage on the ribosome. The chain is Elongation factor Ts (tsf) from Idiomarina loihiensis (strain ATCC BAA-735 / DSM 15497 / L2-TR).